Consider the following 500-residue polypeptide: NAD(P)H-quinone oxidoreductase chain 4, chloroplastic (500 aa).

Helical transmembrane passes span 4–24 (FPWLTIIVVFPISAGSLMLFL), 35–55 (YTICICILELLLTTYAFCYNF), 87–107 (IGTILLTGFITTLATLAAFPV), 113–130 (LFHFLMLAMYSGQIGSFS), 134–154 (LLLFFIMWELELIPVYLLLAM), 167–187 (FILYTAGSSIFLLIGVLGISL), 211–231 (ILFYIGFLIAFAVKSPIIPLH), 242–262 (HYSTCMLLAGILLKMGAYGLV), 272–292 (AHSMFSPWLMVVGTIQIIYAA), 305–325 (IAYSSVSHMGFIIIGISSITD), 330–350 (GAILQIISHGFIGAALFFLAG), 364–384 (MGGMAISIPKIFTMFTILSMA), 386–406 (LALPGMSGFIAELIVFFGIIT), 411–431 (FLIFKILIIFVMAIGMILTPI), and 462–482 (LFLSISILIPIIGIGIYPDFV).

The protein belongs to the complex I subunit 4 family.

The protein localises to the plastid. It localises to the chloroplast thylakoid membrane. It carries out the reaction a plastoquinone + NADH + (n+1) H(+)(in) = a plastoquinol + NAD(+) + n H(+)(out). The catalysed reaction is a plastoquinone + NADPH + (n+1) H(+)(in) = a plastoquinol + NADP(+) + n H(+)(out). This chain is NAD(P)H-quinone oxidoreductase chain 4, chloroplastic, found in Capsella bursa-pastoris (Shepherd's purse).